Here is a 154-residue protein sequence, read N- to C-terminus: Protein E6 (154 aa).

Zinc fingers lie at residues 34-70 (CVFC…CKFC) and 107-143 (CYRC…CLTC).

This sequence belongs to the papillomaviridae E6 protein family. As to quaternary structure, forms homodimers. Interacts with ubiquitin-protein ligase UBE3A/E6-AP; this interaction stimulates UBE3A ubiquitin activity. Interacts with host TP53 and EP300; this interaction inhibits TP53 activity.

The protein localises to the host cytoplasm. Its subcellular location is the host nucleus. Its function is as follows. Plays a major role in the induction and maintenance of cellular transformation. E6 associates with host UBE3A/E6-AP ubiquitin-protein ligase and modulates its activity. Sequesters tumor suppressor TP53 in the host cytoplasm and modulates its activity by interacting with host EP300 that results in the reduction of TP53 acetylation and activation. In turn, apoptosis induced by DNA damage is inhibited. E6 also protects host keratinocytes from apoptosis by mediating the degradation of host BAK1. May also inhibit host immune response. The protein is Protein E6 of Human papillomavirus type 53.